The chain runs to 65 residues: Alpha-conotoxine-like Am1.5 (65 aa).

Positions 1 to 21 (MGMRMMFTVFLLVVLATTVVS) are cleaved as a signal peptide. A propeptide spanning residues 22-46 (FMSGRAFRDRNAAAKVSDLIALKAR) is cleaved from the precursor. Glu49 carries the post-translational modification 4-carboxyglutamate. The interval 52-54 (SHP) is ser-Xaa-Pro motif, crucial for potent interaction with nAChR. A 4-hydroxyproline mark is found at Pro54 and Pro61. A 4-carboxyglutamate modification is found at Glu62.

It belongs to the conotoxin A superfamily. Contains 2 disulfide bonds. In terms of tissue distribution, expressed by the venom duct.

Its subcellular location is the secreted. Its function is as follows. Alpha-conotoxins act on postsynaptic membranes, they bind to the nicotinic acetylcholine receptors (nAChR) and thus inhibit them. This Conus amadis (Amadis cone) protein is Alpha-conotoxine-like Am1.5.